A 905-amino-acid chain; its full sequence is Heme/hemopexin-binding protein (905 aa).

The signal sequence occupies residues 1 to 21 (MYKLNVISLIILTTYTGATYA).

The protein localises to the secreted. Functionally, binds heme/hemopexin complexes. The chain is Heme/hemopexin-binding protein (hxuA) from Haemophilus influenzae (strain ATCC 51907 / DSM 11121 / KW20 / Rd).